The following is a 293-amino-acid chain: Ribosomal protein L11 methyltransferase (293 aa).

4 residues coordinate S-adenosyl-L-methionine: Thr-145, Gly-166, Asp-188, and Asn-229.

It belongs to the methyltransferase superfamily. PrmA family.

It localises to the cytoplasm. The catalysed reaction is L-lysyl-[protein] + 3 S-adenosyl-L-methionine = N(6),N(6),N(6)-trimethyl-L-lysyl-[protein] + 3 S-adenosyl-L-homocysteine + 3 H(+). Methylates ribosomal protein L11. This chain is Ribosomal protein L11 methyltransferase, found in Idiomarina loihiensis (strain ATCC BAA-735 / DSM 15497 / L2-TR).